A 441-amino-acid chain; its full sequence is Vacuolar cation/proton exchanger 2 (441 aa).

At 1–69 the chain is on the cytoplasmic side; the sequence is MSCCKVPVLI…PKNSVLNSIK (69 aa). Residues 70 to 90 traverse the membrane as a helical segment; the sequence is IVIFCNKLNLLLPFGPLAILV. The Extracellular segment spans residues 91–97; the sequence is HYMIDSK. The chain crosses the membrane as a helical span at residues 98–118; that stretch reads GWVFLLTLVGITPLAERLGYA. At 119–129 the chain is on the cytoplasmic side; sequence TEQLACYTGPT. The chain crosses the membrane as a helical span at residues 130–150; it reads VGGLLNATFGNVTELIISIFA. The segment at 139–174 is cation selection; it reads GNVTELIISIFALKNGMIRVVQLTLLGSILSNMLLV. At 151-166 the chain is on the extracellular side; that stretch reads LKNGMIRVVQLTLLGS. Residues 167 to 187 form a helical membrane-spanning segment; the sequence is ILSNMLLVLGCAFFCGGLVFY. The Cytoplasmic segment spans residues 188–196; it reads QKDQVFDKG. A helical membrane pass occupies residues 197-217; it reads IATVNSGLLLMAVMGILFPAV. The Extracellular segment spans residues 218-231; it reads LHYTHSEVHAGSSE. A helical transmembrane segment spans residues 232–252; that stretch reads LALSRFSSCIMLIAYAAYLFF. Residues 253-286 lie on the Cytoplasmic side of the membrane; sequence QLKSQSNSYSPLDEESNQNEETSAEDEDPEISKW. Residues 287-307 traverse the membrane as a helical segment; it reads EAIIWLSILTAWVSLLSGYLV. The Extracellular segment spans residues 308–311; sequence DAIE. Residues 312–332 traverse the membrane as a helical segment; sequence GASVSWNIPIAFISTILLPIV. At 333 to 354 the chain is on the cytoplasmic side; the sequence is GNAAEHAGAIMFAMKDKLDLSL. Positions 333–368 are cation selection; sequence GNAAEHAGAIMFAMKDKLDLSLGVAIGSSIQISMFA. Residues 355 to 375 traverse the membrane as a helical segment; sequence GVAIGSSIQISMFAVPFCVVI. At 376 to 384 the chain is on the extracellular side; that stretch reads GWMMGQQMD. The chain crosses the membrane as a helical span at residues 385–405; the sequence is LNFQLFETAMLFITVIVVAFF. Residues 406-412 are Cytoplasmic-facing; the sequence is LQEGSSN. The chain crosses the membrane as a helical span at residues 413-433; that stretch reads YFKGLMLILCYLIVAASFFVH. The Extracellular portion of the chain corresponds to 434–441; the sequence is EDPHQDGI.

It belongs to the Ca(2+):cation antiporter (CaCA) (TC 2.A.19) family. Cation/proton exchanger (CAX) subfamily.

It is found in the vacuole membrane. With respect to regulation, inhibited by excess of Ca(2+) and Cd(2+), Mn(2+), and Zn(2+). Vacuolar cation/proton exchanger (CAX). Translocates Ca(2+) and other metal ions into vacuoles using the proton gradient formed by H(+)-ATPase and H(+)-pyrophosphatase. The sequence is that of Vacuolar cation/proton exchanger 2 (CAX2) from Arabidopsis thaliana (Mouse-ear cress).